We begin with the raw amino-acid sequence, 318 residues long: MPVTVTRTTITTTSSSSTTVGSARALTQPLGLLRLLQLVSTCVAFSLVASVGAWTGPMGNWAMFTWCFCFAVTLIILIEELGGFQARFPLSWRNFPITFACYAALFCLSSSIIYPTTYVQFLPHGRSRDHAIAATTFSCVACLAYATEVAWTRARPGEITGYMATVPGLLKVFETFVACIIFAFISEPSLYQQRPALEWCVAVYAICFILAAVTVLLNLGDCTNMLPIPFPTFLSGLALLSVLLYATAIVLWPLYQFDQRYNSQPRRSMDPSCSRSYVQPNEVCNWDRRLAVSILTGINLLAYVSDLVYSTRLVFVKV.

2 MARVEL domains span residues 25–157 (ALTQ…ARPG) and 162–315 (YMAT…RLVF). 8 helical membrane-spanning segments follow: residues 35–55 (LLQL…GAWT), 58–78 (MGNW…IILI), 95–115 (FPIT…IIYP), 131–151 (AIAA…EVAW), 165–185 (TVPG…FAFI), 197–217 (LEWC…TVLL), 233–253 (FLSG…VLWP), and 290–310 (LAVS…LVYS).

Belongs to the MAL family.

The protein resides in the membrane. This is Myeloid-associated differentiation marker (Myadm) from Rattus norvegicus (Rat).